The chain runs to 173 residues: Alpha-crystallin A chain (173 aa).

M1 bears the N-acetylmethionine mark. The segment at 1–63 (MDVTIQHPWF…RTVLDSGVSE (63 aa)) is required for complex formation with BFSP1 and BFSP2. At Q6 the chain carries Deamidated glutamine; partial. S45 bears the Phosphoserine mark. Q50 is modified (deamidated glutamine; partial). A sHSP domain is found at 52-162 (LFRTVLDSGV…GHSERAIPVS (111 aa)). K70 carries the N6-acetyllysine modification. Q90 is subject to Deamidated glutamine; partial. N6-acetyllysine is present on K99. H100 serves as a coordination point for Zn(2+). At N101 the chain carries Deamidated asparagine; partial. Residues E102 and H107 each coordinate Zn(2+). S122 carries the post-translational modification Phosphoserine. Position 123 is a deamidated asparagine; partial (N123). Residues 144–173 (PKVQSGLDAGHSERAIPVSREEKPSSAPSS) are disordered. Q147 is modified (deamidated glutamine; partial). The span at 153–167 (GHSERAIPVSREEKP) shows a compositional bias: basic and acidic residues. H154 provides a ligand contact to Zn(2+). S162 is a glycosylation site (O-linked (GlcNAc) serine).

It belongs to the small heat shock protein (HSP20) family. Heteromer composed of three CRYAA and one CRYAB subunits. Inter-subunit bridging via zinc ions enhances stability, which is crucial as there is no protein turn over in the lens. Can also form homodimers and homotetramers (dimers of dimers) which serve as the building blocks of homooligomers. Within homooligomers, the zinc-binding motif is created from residues of 3 different molecules. His-100 and Glu-102 from one molecule are ligands of the zinc ion, and His-107 and His-154 residues from additional molecules complete the site with tetrahedral coordination geometry. Part of a complex required for lens intermediate filament formation composed of BFSP1, BFSP2 and CRYAA. Acetylation at Lys-70 may increase chaperone activity. In terms of processing, undergoes age-dependent proteolytical cleavage at the C-terminus.

It localises to the cytoplasm. The protein resides in the nucleus. Functionally, contributes to the transparency and refractive index of the lens. Acts as a chaperone, preventing aggregation of various proteins under a wide range of stress conditions. Required for the correct formation of lens intermediate filaments as part of a complex composed of BFSP1, BFSP2 and CRYAA. This Otolemur crassicaudatus (Brown greater galago) protein is Alpha-crystallin A chain (CRYAA).